Here is a 283-residue protein sequence, read N- to C-terminus: Flagellar filament 35 kDa core protein (283 aa).

Belongs to the bacterial flagellin family. The flagellum consists of two outer layers around a core that contains several antigenically related polypeptides.

It is found in the periplasmic flagellum. The protein localises to the periplasm. Component of the core of the flagella. This Leptospira interrogans serogroup Icterohaemorrhagiae serovar copenhageni (strain Fiocruz L1-130) protein is Flagellar filament 35 kDa core protein (flaB).